The primary structure comprises 475 residues: Neuronal acetylcholine receptor subunit alpha-5 (475 aa).

A signal peptide spans 1-29 (MAAPGWGRWVLGLGPLLLQVFLPFQLVAG). Over 30 to 261 (RWGPEGAGGG…VIKRLPLFYT (232 aa)) the chain is Extracellular. A disulfide bond links cysteine 177 and cysteine 191. N-linked (GlcNAc...) asparagine glycosylation is found at asparagine 190 and asparagine 236. A disulfide bridge links cysteine 241 with cysteine 242. 3 helical membrane-spanning segments follow: residues 262 to 282 (LFLIIPCIGLSFLTVLVFYLP), 289 to 309 (ICLCTSVLVSLTVFLLVIEEI), and 324 to 344 (LVFTMIFVTLSIMVTVFAINI). At 345–437 (HHRSSSTHDA…KFIAQVLDRM (93 aa)) the chain is on the cytoplasmic side. A helical membrane pass occupies residues 438–458 (FLWTFLLVSVVGSLGLFVPVI). Residues 459 to 475 (YKWANIIVPIHIGNENK) lie on the Extracellular side of the membrane.

The protein belongs to the ligand-gated ion channel (TC 1.A.9) family. Acetylcholine receptor (TC 1.A.9.1) subfamily. Alpha-5/CHRNA5 sub-subfamily. In terms of assembly, neuronal AChR that forms heteropentamers composed of two different type of subunits: alpha and non-alpha (beta). CHRNA5/alpha-5 subunit is only able to form functional nAChRs when co-assembled with another alpha subunit, can be combined to CHRNA4/alpha-4 or CHRNA3/alpha-3 and CHRNB4/beta-4 or CHRNB2/beta-2 to give rise to functional receptors. Interacts with LYPD6.

Its subcellular location is the synaptic cell membrane. It is found in the cell membrane. The catalysed reaction is Ca(2+)(in) = Ca(2+)(out). It carries out the reaction K(+)(in) = K(+)(out). The enzyme catalyses Na(+)(in) = Na(+)(out). With respect to regulation, activated by a myriad of ligands such as acetylcholine, cytisine, nicotine, choline and epibatidine. Component of neuronal acetylcholine receptors (nAChRs) that function as pentameric, ligand-gated cation channels with high calcium permeability among other activities. nAChRs are excitatory neurotrasnmitter receptors formed by a collection of nAChR subunits known to mediate synaptic transmission in the nervous system and the neuromuscular junction. Each nAchR subunit confers differential attributes to channel properties, including activation, deactivation and desensitization kinetics, pH sensitivity, cation permeability, and binding to allosteric modulators. Has an accessory rather than functional role and is only able to form functional nAChRs when co-assembled with another beta subunit. Participates in pentameric assemblies along with CHRNA3, CHRNA4, CHRNB2 and CHRNB4. Increases receptor sensitivity to acetylcholine and nicotine when associated with CHRNA4 and CHRNB2. Plays a role in nicotine addiction. The sequence is that of Neuronal acetylcholine receptor subunit alpha-5 (CHRNA5) from Bos taurus (Bovine).